Reading from the N-terminus, the 973-residue chain is DENN domain-containing protein C297.05 (973 aa).

Polar residues predominate over residues 69-79 (AHHNTTGSNSV). A disordered region spans residues 69–136 (AHHNTTGSNS…YHSRKPYSEP (68 aa)). A phosphoserine mark is found at S134 and S318. In terms of domain architecture, uDENN spans 169-427 (ALPLFAATHP…NICCDVPLPP (259 aa)). One can recognise a cDENN domain in the interval 449–586 (VNEIPGWNDV…LRSKLQAHLK (138 aa)). The region spanning 588-919 (AAPLHDKFYV…DRCELDLNDP (332 aa)) is the dDENN domain. The disordered stretch occupies residues 693-713 (RNFSSPPFTRPASPSSSKFRF). Residue S726 is modified to Phosphoserine. The interval 729–750 (SPYSVPELRSSESNQNKAGSIN) is disordered. Residues 739–750 (SESNQNKAGSIN) are compositionally biased toward polar residues.

Its subcellular location is the cytoplasm. It localises to the nucleus. The sequence is that of DENN domain-containing protein C297.05 from Schizosaccharomyces pombe (strain 972 / ATCC 24843) (Fission yeast).